We begin with the raw amino-acid sequence, 395 residues long: Bone morphogenetic protein 2 (395 aa).

The first 23 residues, 1–23 (MVAGTRCLLALLLPQVLLGGAAG), serve as a signal peptide directing secretion. The propeptide at 24–281 (LIPELGRRKF…GHPLHRREKR (258 aa)) is cleaved by PCSK5. Serine 86 carries the phosphoserine modification. N-linked (GlcNAc...) asparagine glycans are attached at residues asparagine 134 and asparagine 199. The tract at residues 270–292 (GKGHPLHRREKRQAKHKQRKRLK) is disordered. The segment covering 273 to 292 (HPLHRREKRQAKHKQRKRLK) has biased composition (basic residues). Disulfide bonds link cysteine 295-cysteine 360, cysteine 324-cysteine 392, and cysteine 328-cysteine 394. N-linked (GlcNAc...) asparagine glycosylation is present at asparagine 337.

Belongs to the TGF-beta family. As to quaternary structure, homodimer; disulfide-linked. Interacts with SOSTDC1. Interacts with GREM2, RGMA, RGMB and RGMC. Interacts with ASPN. Interacts with MAFP5. Interacts with FBN1 (via N-terminal domain) and FBN2. Interacts with type I receptor BMPR1A. Interacts with type II receptor BMPR2. Interacts with SCUBE3. Interacts with TNFAIP6 (primarily via Link domain); this interaction is inhibited by hyaluronan. Interacts with ERFE. Interacts with BMPR1A/ALK3; the interaction may induce HAMP expression. Forms heterodimers with BMP6 in vitro; the heterodimer then binds to its receptor BMPR1A /ALK3 and may induce HAMP expression. Interacts with TGFBR3.

It is found in the secreted. Growth factor of the TGF-beta superfamily that plays essential roles in many developmental processes, including cardiogenesis, neurogenesis, and osteogenesis. Induces cartilage and bone formation. Initiates the canonical BMP signaling cascade by associating with type I receptor BMPR1A and type II receptor BMPR2. Once all three components are bound together in a complex at the cell surface, BMPR2 phosphorylates and activates BMPR1A. In turn, BMPR1A propagates signal by phosphorylating SMAD1/5/8 that travel to the nucleus and act as activators and repressors of transcription of target genes. Also acts to promote expression of HAMP, via the interaction with its receptor BMPR1A/ALK3. Can also signal through non-canonical pathways such as ERK/MAP kinase signaling cascade that regulates osteoblast differentiation. Also stimulates the differentiation of myoblasts into osteoblasts via the EIF2AK3-EIF2A-ATF4 pathway by stimulating EIF2A phosphorylation which leads to increased expression of ATF4 which plays a central role in osteoblast differentiation. Acts as a positive regulator of odontoblast differentiation during mesenchymal tooth germ formation, expression is repressed during the bell stage by MSX1-mediated inhibition of CTNNB1 signaling. The polypeptide is Bone morphogenetic protein 2 (BMP2) (Oryctolagus cuniculus (Rabbit)).